The following is a 400-amino-acid chain: Na(+)/H(+) antiporter NhaA (400 aa).

Helical transmembrane passes span 18-38, 68-88, 105-125, 133-153, 163-183, 186-206, 211-231, 232-252, 267-287, 305-325, 338-358, and 372-392; these read LATE…AIII, VHMW…GLEI, LPAL…LAVS, GGWA…LALL, VMLV…IAVF, SSIN…LLAF, VVAL…TLLS, GVHA…SAGS, GLAP…NAGV, IALG…LLAV, WLQI…SLFI, and AAKI…CVIL.

It belongs to the NhaA Na(+)/H(+) (TC 2.A.33) antiporter family.

The protein localises to the cell inner membrane. The catalysed reaction is Na(+)(in) + 2 H(+)(out) = Na(+)(out) + 2 H(+)(in). In terms of biological role, na(+)/H(+) antiporter that extrudes sodium in exchange for external protons. This Pseudomonas entomophila (strain L48) protein is Na(+)/H(+) antiporter NhaA.